Consider the following 358-residue polypeptide: Histamine H2 receptor (358 aa).

Over 1-22 (MEPNGTVHSCCLDSMALKVTIS) the chain is Extracellular. Asparagine 4 is a glycosylation site (N-linked (GlcNAc...) asparagine). The helical transmembrane segment at 23 to 44 (VVLTTLILITIAGNVVVCLAVS) threads the bilayer. Topologically, residues 45–57 (LNRRLRSLTNCFI) are cytoplasmic. Residues 58–81 (VSLAATDLLLGLLVLPFSAIYQLS) traverse the membrane as a helical segment. Residues 82–92 (FTWSFGHVFCN) are Extracellular-facing. Cysteines 91 and 173 form a disulfide. Residues 93–114 (IYTSLDVMLCTASILNLFMISL) traverse the membrane as a helical segment. At 115–134 (DRYCAVTDPLRYPVLVTPVR) the chain is on the cytoplasmic side. Residues 135–159 (VAISLVFIWVISITLSFLSIHLGWN) form a helical membrane-spanning segment. The Extracellular portion of the chain corresponds to 160 to 179 (SRNGTRGGNDTFKCKVQVNE). The helical transmembrane segment at 180-203 (VYGLVDGLVTFYLPLLIMCVTYYR) threads the bilayer. The Cytoplasmic segment spans residues 204–233 (IFKIAREQAKRINHISSWKAATIREHKATV). Residues 234-257 (TLAAVMGAFIICWFPYFTAFVYRG) traverse the membrane as a helical segment. At 258 to 266 (LRGDDAINE) the chain is on the extracellular side. The helical transmembrane segment at 267–288 (AVEGIVLWLGYANSALNPILYA) threads the bilayer. The Cytoplasmic portion of the chain corresponds to 289 to 358 (ALNRDFRTAY…LTHPQGNPIR (70 aa)). The S-palmitoyl cysteine moiety is linked to residue cysteine 304.

This sequence belongs to the G-protein coupled receptor 1 family.

It localises to the cell membrane. Functionally, the H2 subclass of histamine receptors mediates gastric acid secretion. The activity of this receptor is mediated by G proteins which activate adenylyl cyclase. This chain is Histamine H2 receptor (Hrh2), found in Rattus norvegicus (Rat).